The primary structure comprises 94 residues: Co-chaperonin GroES (94 aa).

Belongs to the GroES chaperonin family. In terms of assembly, heptamer of 7 subunits arranged in a ring. Interacts with the chaperonin GroEL.

The protein resides in the cytoplasm. Functionally, together with the chaperonin GroEL, plays an essential role in assisting protein folding. The GroEL-GroES system forms a nano-cage that allows encapsulation of the non-native substrate proteins and provides a physical environment optimized to promote and accelerate protein folding. GroES binds to the apical surface of the GroEL ring, thereby capping the opening of the GroEL channel. This is Co-chaperonin GroES from Clostridium botulinum.